The sequence spans 230 residues: TPR repeat-containing protein BB_0298 (230 aa).

TPR repeat units follow at residues 69-102 (ARFFNLIGLEFFKLGQYGPAIEYFAKNLEINPNN) and 183-216 (FEFLMLRGANYYSLGDLGNAILFYDKASKKASTE).

This chain is TPR repeat-containing protein BB_0298, found in Borreliella burgdorferi (strain ATCC 35210 / DSM 4680 / CIP 102532 / B31) (Borrelia burgdorferi).